Consider the following 968-residue polypeptide: RNA polymerase-associated protein RapA (968 aa).

Positions 163 to 332 constitute a Helicase ATP-binding domain; it reads EVGQRFAPRV…FARLRLLDPD (170 aa). Position 176-183 (176-183) interacts with ATP; it reads DEVGLGKT. The DEAH box motif lies at 278-281; it reads DEAH. Positions 491–678 constitute a Helicase C-terminal domain; the sequence is RVDWLIDFLK…GTKARYQELK (188 aa).

Belongs to the SNF2/RAD54 helicase family. RapA subfamily. As to quaternary structure, interacts with the RNAP. Has a higher affinity for the core RNAP than for the holoenzyme. Its ATPase activity is stimulated by binding to RNAP.

Functionally, transcription regulator that activates transcription by stimulating RNA polymerase (RNAP) recycling in case of stress conditions such as supercoiled DNA or high salt concentrations. Probably acts by releasing the RNAP, when it is trapped or immobilized on tightly supercoiled DNA. Does not activate transcription on linear DNA. Probably not involved in DNA repair. The protein is RNA polymerase-associated protein RapA of Shewanella pealeana (strain ATCC 700345 / ANG-SQ1).